The following is a 561-amino-acid chain: Arginine--tRNA ligase (561 aa).

The short motif at 119 to 129 is the 'HIGH' region element; that stretch reads PNIAKPMSMGH.

Belongs to the class-I aminoacyl-tRNA synthetase family. In terms of assembly, monomer.

It localises to the cytoplasm. The catalysed reaction is tRNA(Arg) + L-arginine + ATP = L-arginyl-tRNA(Arg) + AMP + diphosphate. This is Arginine--tRNA ligase from Lactobacillus acidophilus (strain ATCC 700396 / NCK56 / N2 / NCFM).